Reading from the N-terminus, the 504-residue chain is ATP synthase subunit alpha (504 aa).

Residue 169 to 176 (GDRQTGKT) coordinates ATP.

The protein belongs to the ATPase alpha/beta chains family. F-type ATPases have 2 components, CF(1) - the catalytic core - and CF(0) - the membrane proton channel. CF(1) has five subunits: alpha(3), beta(3), gamma(1), delta(1), epsilon(1). CF(0) has three main subunits: a(1), b(2) and c(9-12). The alpha and beta chains form an alternating ring which encloses part of the gamma chain. CF(1) is attached to CF(0) by a central stalk formed by the gamma and epsilon chains, while a peripheral stalk is formed by the delta and b chains.

The protein localises to the cell membrane. It carries out the reaction ATP + H2O + 4 H(+)(in) = ADP + phosphate + 5 H(+)(out). Functionally, produces ATP from ADP in the presence of a proton gradient across the membrane. The alpha chain is a regulatory subunit. The protein is ATP synthase subunit alpha of Clostridium botulinum (strain Alaska E43 / Type E3).